Consider the following 90-residue polypeptide: Probable Fe(2+)-trafficking protein (90 aa).

It belongs to the Fe(2+)-trafficking protein family.

Could be a mediator in iron transactions between iron acquisition and iron-requiring processes, such as synthesis and/or repair of Fe-S clusters in biosynthetic enzymes. The polypeptide is Probable Fe(2+)-trafficking protein (Marinobacter nauticus (strain ATCC 700491 / DSM 11845 / VT8) (Marinobacter aquaeolei)).